We begin with the raw amino-acid sequence, 433 residues long: Ligand-dependent corepressor (433 aa).

The segment at 1–51 (MQRMIQQFAAEYTSKNSSTQDPSQPNSTKNQSLPKASPVTTSPTAATTQNP) is disordered. The segment covering 13 to 34 (TSKNSSTQDPSQPNSTKNQSLP) has biased composition (polar residues). Residues 36-48 (ASPVTTSPTAATT) show a composition bias toward low complexity. Residue S42 is modified to Phosphoserine. Residues 53-57 (LSKLL) carry the Interaction with nuclear receptors motif. The residue at position 63 (S63) is a Phosphoserine. The interval 64–147 (PLDLTVRKSQ…GTREGFGHST (84 aa)) is disordered. Positions 93–110 (AGSTSLSHSPGCSSTQGN) are enriched in polar residues. S249 carries the post-translational modification Phosphoserine. Residue K254 forms a Glycyl lysine isopeptide (Lys-Gly) (interchain with G-Cter in SUMO2) linkage. Residues 299–348 (QSRKSMLDAGPDSWGSDAEQSTSGQPYPTSDQEGDPGSKQPRKKRGRYRQ) form a disordered region. The span at 316 to 329 (AEQSTSGQPYPTSD) shows a compositional bias: polar residues. The short motif at 339–345 (PRKKRGR) is the Nuclear localization signal element. The HTH psq-type domain maps to 340–392 (RKKRGRYRQYNSEILEEAISVVMSGKMSVSKAQSIYGIPHSTLEYKVKERLGT). A Glycyl lysine isopeptide (Lys-Gly) (interchain with G-Cter in SUMO2) cross-link involves residue R345. Residues 368-388 (VSKAQSIYGIPHSTLEYKVKE) constitute a DNA-binding region (H-T-H motif). A Glycyl lysine isopeptide (Lys-Gly) (interchain with G-Cter in SUMO2) cross-link involves residue G391. A disordered region spans residues 393–412 (LKNPPKKKMKLMRSEGPDVS). K414 is covalently cross-linked (Glycyl lysine isopeptide (Lys-Gly) (interchain with G-Cter in SUMO2)).

Interacts with ESR1 and ESR2 in the presence of estradiol. Interacts with CTBP1, HDAC3 and HDAC6. Component of a large corepressor complex that contains about 20 proteins, including CTBP1, CTBP2, HDAC1 and HDAC2. As to expression, ubiquitous.

It localises to the nucleus. Its function is as follows. May act as transcription activator that binds DNA elements with the sequence 5'-CCCTATCGATCGATCTCTACCT-3'. Repressor of ligand-dependent transcription activation by target nuclear receptors. Repressor of ligand-dependent transcription activation by ESR1, ESR2, NR3C1, PGR, RARA, RARB, RARG, RXRA and VDR. The protein is Ligand-dependent corepressor of Homo sapiens (Human).